Here is a 419-residue protein sequence, read N- to C-terminus: MGQFLIQGGCQLKGEVTISGAKNAALPILFASLLSKGNVNLTNVPLLKDISTTLELLKELGAEASQDGHEVHINASSVKNYTASYELVRSMRASILALGPLVARFGEADISLPGGCAIGARPVNLHIHGLEQMGAIIKVQNGFIKARVNGRLKGAHLYMDMVSVTGTGNLMMAAALAEGVTTIENAAKEPELVDLANFINGMGGKISGAGTDTLTIEGVESLGDCSYQVQPDRIETGTFLVAGVVSGGKVKCLKTAPHLLTAVLSKLEEAGAAVTTGSDWIEVDMIDRQLKSVNISTAPHPAFPTDMQAQFTVLNTVAPGTGRIKENIFENRFMHVPELQRMGANIILEGNLAICGDPDPLCGAEVMATDLRASASLVIAGLIAEGETIVDEIYHIDRGYEAIENKLIALGAKIKRIEN.

Phosphoenolpyruvate is bound at residue 22–23 (KN). Residue arginine 92 coordinates UDP-N-acetyl-alpha-D-glucosamine. Cysteine 116 serves as the catalytic Proton donor. Cysteine 116 bears the 2-(S-cysteinyl)pyruvic acid O-phosphothioketal mark. The UDP-N-acetyl-alpha-D-glucosamine site is built by aspartate 306 and isoleucine 328.

Belongs to the EPSP synthase family. MurA subfamily.

The protein resides in the cytoplasm. It carries out the reaction phosphoenolpyruvate + UDP-N-acetyl-alpha-D-glucosamine = UDP-N-acetyl-3-O-(1-carboxyvinyl)-alpha-D-glucosamine + phosphate. It participates in cell wall biogenesis; peptidoglycan biosynthesis. Its function is as follows. Cell wall formation. Adds enolpyruvyl to UDP-N-acetylglucosamine. In Psychromonas ingrahamii (strain DSM 17664 / CCUG 51855 / 37), this protein is UDP-N-acetylglucosamine 1-carboxyvinyltransferase.